Here is a 496-residue protein sequence, read N- to C-terminus: NADP-dependent glyceraldehyde-3-phosphate dehydrogenase (496 aa).

N-acetylalanine is present on Ala2. The residue at position 4 (Thr4) is a Phosphothreonine. Residues Arg116 and Asn169 to Tyr170 contribute to the substrate site. The NADP(+) site is built by Lys192, Thr195, and Asp230. An NAD(+)-binding site is contributed by Gly245 to Gly249. The Proton acceptor role is filled by Glu264. Residue Arg297–Thr299 coordinates substrate. Cys298 acts as the Nucleophile in catalysis. Glu391 is a binding site for NADP(+). Arg451 is a substrate binding site.

The protein belongs to the aldehyde dehydrogenase family.

The protein resides in the cytoplasm. The enzyme catalyses D-glyceraldehyde 3-phosphate + NADP(+) + H2O = (2R)-3-phosphoglycerate + NADPH + 2 H(+). Its function is as follows. Important as a means of generating NADPH for biosynthetic reactions. The protein is NADP-dependent glyceraldehyde-3-phosphate dehydrogenase (ALDH11A3) of Arabidopsis thaliana (Mouse-ear cress).